We begin with the raw amino-acid sequence, 490 residues long: Pup--protein ligase (490 aa).

Glu-9 is a Mg(2+) binding site. ATP is bound at residue Arg-53. Tyr-55 lines the Mg(2+) pocket. Catalysis depends on Asp-57, which acts as the Proton acceptor. Glu-63 serves as a coordination point for Mg(2+). Ser-66 is a binding site for ATP. The tract at residues 160–181 (KTHPNGGPVPGSTDPASSTGVP) is disordered. Position 441 (Trp-441) interacts with ATP.

It belongs to the Pup ligase/Pup deamidase family. Pup-conjugating enzyme subfamily.

The catalysed reaction is ATP + [prokaryotic ubiquitin-like protein]-L-glutamate + [protein]-L-lysine = ADP + phosphate + N(6)-([prokaryotic ubiquitin-like protein]-gamma-L-glutamyl)-[protein]-L-lysine.. Its pathway is protein degradation; proteasomal Pup-dependent pathway. It functions in the pathway protein modification; protein pupylation. In terms of biological role, catalyzes the covalent attachment of the prokaryotic ubiquitin-like protein modifier Pup to the proteasomal substrate proteins, thereby targeting them for proteasomal degradation. This tagging system is termed pupylation. The ligation reaction involves the side-chain carboxylate of the C-terminal glutamate of Pup and the side-chain amino group of a substrate lysine. The protein is Pup--protein ligase of Rothia mucilaginosa (strain DY-18) (Stomatococcus mucilaginosus).